A 1486-amino-acid polypeptide reads, in one-letter code: Chromosome partition protein MukB (1486 aa).

34–41 serves as a coordination point for ATP; it reads GGNGAGKS. Coiled coils occupy residues 326–418, 444–480, and 509–603; these read LEAD…QYNQ, LETFQAKELEATEKMLSLEQKMSMAQTAHSQFEQAYQ, and RHLA…RAPV. Residues 666-783 form a flexible hinge region; sequence PGGSEDQRLN…EVPLFGRAAR (118 aa). Coiled coils occupy residues 835-923, 977-1115, and 1209-1266; these read EAEI…AKLE, EMLS…TAKA, and VEAI…QNVS.

Belongs to the SMC family. MukB subfamily. As to quaternary structure, homodimerization via its hinge domain. Binds to DNA via its C-terminal region. Interacts, and probably forms a ternary complex, with MukE and MukF via its C-terminal region. The complex formation is stimulated by calcium or magnesium. Interacts with tubulin-related protein FtsZ.

The protein localises to the cytoplasm. Its subcellular location is the nucleoid. Plays a central role in chromosome condensation, segregation and cell cycle progression. Functions as a homodimer, which is essential for chromosome partition. Involved in negative DNA supercoiling in vivo, and by this means organize and compact chromosomes. May achieve or facilitate chromosome segregation by condensation DNA from both sides of a centrally located replisome during cell division. The sequence is that of Chromosome partition protein MukB from Escherichia coli (strain 55989 / EAEC).